The chain runs to 461 residues: Methylenetetrahydrofolate--tRNA-(uracil-5-)-methyltransferase TrmFO (461 aa).

16–21 lines the FAD pocket; that stretch reads GAGLAG.

The protein belongs to the MnmG family. TrmFO subfamily. FAD serves as cofactor.

The protein localises to the cytoplasm. The enzyme catalyses uridine(54) in tRNA + (6R)-5,10-methylene-5,6,7,8-tetrahydrofolate + NADH + H(+) = 5-methyluridine(54) in tRNA + (6S)-5,6,7,8-tetrahydrofolate + NAD(+). It carries out the reaction uridine(54) in tRNA + (6R)-5,10-methylene-5,6,7,8-tetrahydrofolate + NADPH + H(+) = 5-methyluridine(54) in tRNA + (6S)-5,6,7,8-tetrahydrofolate + NADP(+). In terms of biological role, catalyzes the folate-dependent formation of 5-methyl-uridine at position 54 (M-5-U54) in all tRNAs. The sequence is that of Methylenetetrahydrofolate--tRNA-(uracil-5-)-methyltransferase TrmFO from Parasynechococcus marenigrum (strain WH8102).